A 497-amino-acid polypeptide reads, in one-letter code: Cobyric acid synthase (497 aa).

One can recognise a GATase cobBQ-type domain in the interval 251–443; that stretch reads DLKIGVVWYP…LHGLFDNDFF (193 aa). The active-site Nucleophile is Cys333. His435 is an active-site residue.

It belongs to the CobB/CobQ family. CobQ subfamily.

Its pathway is cofactor biosynthesis; adenosylcobalamin biosynthesis. Functionally, catalyzes amidations at positions B, D, E, and G on adenosylcobyrinic A,C-diamide. NH(2) groups are provided by glutamine, and one molecule of ATP is hydrogenolyzed for each amidation. The polypeptide is Cobyric acid synthase (Carboxydothermus hydrogenoformans (strain ATCC BAA-161 / DSM 6008 / Z-2901)).